A 246-amino-acid polypeptide reads, in one-letter code: Probable transcriptional regulatory protein Teth39_1009 (246 aa).

The segment at 1 to 21 (MSGHSKWANIKHKKEKMDAKK) is disordered.

It belongs to the TACO1 family.

The protein localises to the cytoplasm. The sequence is that of Probable transcriptional regulatory protein Teth39_1009 from Thermoanaerobacter pseudethanolicus (strain ATCC 33223 / 39E) (Clostridium thermohydrosulfuricum).